A 642-amino-acid polypeptide reads, in one-letter code: Threonine--tRNA ligase (642 aa).

Residues 1 to 61 (MPVITLPDGS…ENDAQLSIIT (61 aa)) form the TGS domain. The segment at 243–534 (DHRKIGKQLD…LTEEFAGFFP (292 aa)) is catalytic. At K286 the chain carries N6-acetyllysine. Residues C334, H385, and H511 each coordinate Zn(2+).

The protein belongs to the class-II aminoacyl-tRNA synthetase family. Homodimer. Zn(2+) serves as cofactor.

The protein localises to the cytoplasm. The catalysed reaction is tRNA(Thr) + L-threonine + ATP = L-threonyl-tRNA(Thr) + AMP + diphosphate + H(+). Functionally, catalyzes the attachment of threonine to tRNA(Thr) in a two-step reaction: L-threonine is first activated by ATP to form Thr-AMP and then transferred to the acceptor end of tRNA(Thr). Also edits incorrectly charged L-seryl-tRNA(Thr). In Shigella flexneri serotype 5b (strain 8401), this protein is Threonine--tRNA ligase.